The chain runs to 364 residues: Putative acetyl-CoA C-acetyltransferase YhfS (364 aa).

Cysteine 82 serves as the catalytic Acyl-thioester intermediate. The active-site Proton acceptor is the histidine 318.

It belongs to the thiolase-like superfamily. Thiolase family.

In terms of biological role, may be involved in fatty acid metabolism. The chain is Putative acetyl-CoA C-acetyltransferase YhfS (yhfS) from Bacillus subtilis (strain 168).